A 254-amino-acid polypeptide reads, in one-letter code: Coenzyme F420:L-glutamate ligase (254 aa).

Residues 11-14, 40-41, and lysine 45 each bind GTP; these read IPLI and ST. Aspartate 109 contacts a divalent metal cation. Asparagine 112 lines the GTP pocket. A divalent metal cation contacts are provided by aspartate 150, threonine 151, and glutamate 208. 206 to 213 contributes to the GTP binding site; it reads MGEGAGGI.

Belongs to the CofE family. As to quaternary structure, homodimer. It depends on Mg(2+) as a cofactor. Mn(2+) is required as a cofactor. The cofactor is K(+).

The catalysed reaction is oxidized coenzyme F420-0 + GTP + L-glutamate = oxidized coenzyme F420-1 + GDP + phosphate + H(+). It carries out the reaction oxidized coenzyme F420-1 + GTP + L-glutamate = oxidized coenzyme F420-2 + GDP + phosphate + H(+). Its pathway is cofactor biosynthesis; coenzyme F420 biosynthesis. Functionally, catalyzes the GTP-dependent successive addition of two or more gamma-linked L-glutamates to the L-lactyl phosphodiester of 7,8-didemethyl-8-hydroxy-5-deazariboflavin (F420-0) to form coenzyme F420-0-glutamyl-glutamate (F420-2) or polyglutamated F420 derivatives. This is Coenzyme F420:L-glutamate ligase from Methanosarcina mazei (strain ATCC BAA-159 / DSM 3647 / Goe1 / Go1 / JCM 11833 / OCM 88) (Methanosarcina frisia).